Here is an 81-residue protein sequence, read N- to C-terminus: Translational regulator CsrA (81 aa).

This sequence belongs to the CsrA/RsmA family. Homodimer; the beta-strands of each monomer intercalate to form a hydrophobic core, while the alpha-helices form wings that extend away from the core.

The protein localises to the cytoplasm. In terms of biological role, a translational regulator that binds mRNA to regulate translation initiation and/or mRNA stability. Usually binds in the 5'-UTR at or near the Shine-Dalgarno sequence preventing ribosome-binding, thus repressing translation. Its main target seems to be the major flagellin gene, while its function is anatagonized by FliW. The sequence is that of Translational regulator CsrA from Halothermothrix orenii (strain H 168 / OCM 544 / DSM 9562).